A 466-amino-acid polypeptide reads, in one-letter code: Ribulose bisphosphate carboxylase large chain (466 aa).

K5 bears the N6,N6,N6-trimethyllysine mark. Positions 114 and 164 each coordinate substrate. The Proton acceptor role is filled by K166. K168 contacts substrate. Residues K192, D194, and E195 each contribute to the Mg(2+) site. K192 bears the N6-carboxylysine mark. H285 (proton acceptor) is an active-site residue. Substrate-binding residues include R286, H318, and S370.

Belongs to the RuBisCO large chain family. Type I subfamily. As to quaternary structure, heterohexadecamer of 8 large chains and 8 small chains; disulfide-linked. The disulfide link is formed within the large subunit homodimers. Requires Mg(2+) as cofactor. Post-translationally, the disulfide bond which can form in the large chain dimeric partners within the hexadecamer appears to be associated with oxidative stress and protein turnover.

It is found in the plastid. The protein localises to the chloroplast. The enzyme catalyses 2 (2R)-3-phosphoglycerate + 2 H(+) = D-ribulose 1,5-bisphosphate + CO2 + H2O. It catalyses the reaction D-ribulose 1,5-bisphosphate + O2 = 2-phosphoglycolate + (2R)-3-phosphoglycerate + 2 H(+). Functionally, ruBisCO catalyzes two reactions: the carboxylation of D-ribulose 1,5-bisphosphate, the primary event in carbon dioxide fixation, as well as the oxidative fragmentation of the pentose substrate in the photorespiration process. Both reactions occur simultaneously and in competition at the same active site. This is Ribulose bisphosphate carboxylase large chain from Cucurbita pepo (Vegetable marrow).